We begin with the raw amino-acid sequence, 519 residues long: DDB1- and CUL4-associated factor 17 (519 aa).

2 helical membrane-spanning segments follow: residues 186–206 (VLLY…ILEI) and 222–242 (GILI…QAII).

In terms of assembly, interacts with DDB1, CUL4A and CUL4B. As to expression, ubiquitously expressed in the embryo, with higher expression in brain, liver and skin tissues.

It localises to the membrane. The protein localises to the nucleus. Its subcellular location is the nucleolus. It functions in the pathway protein modification; protein ubiquitination. In terms of biological role, may function as a substrate receptor for CUL4-DDB1 E3 ubiquitin-protein ligase complex. The sequence is that of DDB1- and CUL4-associated factor 17 (Dcaf17) from Mus musculus (Mouse).